The sequence spans 174 residues: 3-hydroxydecanoyl-[acyl-carrier-protein] dehydratase (174 aa).

Histidine 73 is a catalytic residue.

Belongs to the thioester dehydratase family. FabA subfamily. Homodimer.

The protein resides in the cytoplasm. The catalysed reaction is a (3R)-hydroxyacyl-[ACP] = a (2E)-enoyl-[ACP] + H2O. The enzyme catalyses (3R)-hydroxydecanoyl-[ACP] = (2E)-decenoyl-[ACP] + H2O. It catalyses the reaction (2E)-decenoyl-[ACP] = (3Z)-decenoyl-[ACP]. The protein operates within lipid metabolism; fatty acid biosynthesis. Its function is as follows. Necessary for the introduction of cis unsaturation into fatty acids. Catalyzes the dehydration of (3R)-3-hydroxydecanoyl-ACP to E-(2)-decenoyl-ACP and then its isomerization to Z-(3)-decenoyl-ACP. Can catalyze the dehydratase reaction for beta-hydroxyacyl-ACPs with saturated chain lengths up to 16:0, being most active on intermediate chain length. The protein is 3-hydroxydecanoyl-[acyl-carrier-protein] dehydratase of Saccharophagus degradans (strain 2-40 / ATCC 43961 / DSM 17024).